A 158-amino-acid polypeptide reads, in one-letter code: uncharacterized protein (158 aa).

Transmembrane regions (helical) follow at residues 66–86 and 94–114; these read LLIIVAVLFPPLYISGLPWIM and FFSLSITSFIMVPFLLISLTI.

It is found in the membrane. This is an uncharacterized protein from Saccharomyces cerevisiae (strain ATCC 204508 / S288c) (Baker's yeast).